A 138-amino-acid chain; its full sequence is uncharacterized protein (138 aa).

2 helical membrane-spanning segments follow: residues 21–43 (TAFILLIVLAGFGYTAYKIAGGA) and 48–65 (SLIAAAIFALFISLYAII).

It localises to the cell membrane. This is an uncharacterized protein from Archaeoglobus fulgidus (strain ATCC 49558 / DSM 4304 / JCM 9628 / NBRC 100126 / VC-16).